A 466-amino-acid polypeptide reads, in one-letter code: Cysteine--tRNA ligase (466 aa).

Cys-33 provides a ligand contact to Zn(2+). A 'HIGH' region motif is present at residues 35–45 (PTVYDYAHIGN). Residues Cys-221, His-246, and Glu-250 each coordinate Zn(2+). The short motif at 279–283 (KMSKS) is the 'KMSKS' region element. Lys-282 lines the ATP pocket.

This sequence belongs to the class-I aminoacyl-tRNA synthetase family. In terms of assembly, monomer. Zn(2+) is required as a cofactor.

The protein resides in the cytoplasm. It catalyses the reaction tRNA(Cys) + L-cysteine + ATP = L-cysteinyl-tRNA(Cys) + AMP + diphosphate. The sequence is that of Cysteine--tRNA ligase from Rhizobium meliloti (strain 1021) (Ensifer meliloti).